The following is a 200-amino-acid chain: GTP-binding protein rho2 (200 aa).

15–22 (GDGACGKT) contributes to the GTP binding site. Positions 37–45 (YVPTVFENY) match the Effector region motif. GTP-binding positions include 62-66 (DTAGQ) and 120-123 (MKAD). The residue at position 197 (Cys-197) is a Cysteine methyl ester. Residue Cys-197 is the site of S-geranylgeranyl cysteine attachment. A propeptide spans 198 to 200 (IIS) (removed in mature form).

Belongs to the small GTPase superfamily. Rho family. Interacts with pck2.

The protein localises to the cell membrane. Its function is as follows. Involved in cell morphogenesis, the maintenance of growth direction, control of polarity and of cell wall integrity. Regulates the synthesis of alpha-D-glucan through activation of pck2. The protein is GTP-binding protein rho2 (rho2) of Schizosaccharomyces pombe (strain 972 / ATCC 24843) (Fission yeast).